We begin with the raw amino-acid sequence, 340 residues long: GTP 3',8-cyclase (340 aa).

The Radical SAM core domain occupies 8-227; the sequence is KLGRPIRDLR…DMIESHFDIE (220 aa). Arg-17 contributes to the GTP binding site. The [4Fe-4S] cluster site is built by Cys-24 and Cys-28. Tyr-30 serves as a coordination point for S-adenosyl-L-methionine. Cys-31 is a [4Fe-4S] cluster binding site. Arg-71 contacts GTP. Gly-75 contacts S-adenosyl-L-methionine. A GTP-binding site is contributed by Thr-102. Ser-126 provides a ligand contact to S-adenosyl-L-methionine. Lys-163 lines the GTP pocket. Met-197 provides a ligand contact to S-adenosyl-L-methionine. Residues Cys-261 and Cys-264 each coordinate [4Fe-4S] cluster. 266 to 268 contributes to the GTP binding site; the sequence is RAR. Residue Cys-278 participates in [4Fe-4S] cluster binding.

Belongs to the radical SAM superfamily. MoaA family. In terms of assembly, monomer and homodimer. The cofactor is [4Fe-4S] cluster.

The enzyme catalyses GTP + AH2 + S-adenosyl-L-methionine = (8S)-3',8-cyclo-7,8-dihydroguanosine 5'-triphosphate + 5'-deoxyadenosine + L-methionine + A + H(+). The protein operates within cofactor biosynthesis; molybdopterin biosynthesis. Its function is as follows. Catalyzes the cyclization of GTP to (8S)-3',8-cyclo-7,8-dihydroguanosine 5'-triphosphate. The chain is GTP 3',8-cyclase from Staphylococcus haemolyticus (strain JCSC1435).